Here is a 750-residue protein sequence, read N- to C-terminus: NAD(P)H-quinone oxidoreductase subunit 5, chloroplastic (750 aa).

16 helical membrane passes run 9 to 29, 40 to 60, 89 to 109, 125 to 145, 147 to 167, 185 to 205, 219 to 239, 258 to 278, 280 to 300, 327 to 347, 354 to 374, 396 to 416, 425 to 445, 554 to 574, 607 to 627, and 728 to 748; these read WIIP…LLLF, WAFP…DLSI, IDSL…LVLI, FAYL…SNLI, IYVF…FWFT, GDFG…SLEF, NEVN…GSVA, TPIS…FLVA, LLPL…IGII, LGYM…FHLI, ALLF…VGYS, TSFL…CFWS, WLYS…TAFY, FSIL…ISFS, FLTN…IASF, and YILL…FLFT.

It belongs to the complex I subunit 5 family. As to quaternary structure, NDH is composed of at least 16 different subunits, 5 of which are encoded in the nucleus.

Its subcellular location is the plastid. It is found in the chloroplast thylakoid membrane. The enzyme catalyses a plastoquinone + NADH + (n+1) H(+)(in) = a plastoquinol + NAD(+) + n H(+)(out). It carries out the reaction a plastoquinone + NADPH + (n+1) H(+)(in) = a plastoquinol + NADP(+) + n H(+)(out). Functionally, NDH shuttles electrons from NAD(P)H:plastoquinone, via FMN and iron-sulfur (Fe-S) centers, to quinones in the photosynthetic chain and possibly in a chloroplast respiratory chain. The immediate electron acceptor for the enzyme in this species is believed to be plastoquinone. Couples the redox reaction to proton translocation, and thus conserves the redox energy in a proton gradient. The polypeptide is NAD(P)H-quinone oxidoreductase subunit 5, chloroplastic (ndhF) (Glycine max (Soybean)).